Consider the following 351-residue polypeptide: Holliday junction branch migration complex subunit RuvB (351 aa).

The tract at residues 1-186 is large ATPase domain (RuvB-L); sequence MDEKIETRLI…FGIVQRLEFY (186 aa). ATP is bound by residues I25, R26, G67, K70, T71, T72, 133-135, R176, Y186, and R223; that span reads EDF. T71 contributes to the Mg(2+) binding site. The tract at residues 187–257 is small ATPAse domain (RuvB-S); that stretch reads RIPDLIHIVK…IAKEALDLLN (71 aa). A head domain (RuvB-H) region spans residues 260-351; sequence IRGLDVMDRK…ENFDLLGKVE (92 aa). The DNA site is built by R296, R315, and R320.

It belongs to the RuvB family. Homohexamer. Forms an RuvA(8)-RuvB(12)-Holliday junction (HJ) complex. HJ DNA is sandwiched between 2 RuvA tetramers; dsDNA enters through RuvA and exits via RuvB. An RuvB hexamer assembles on each DNA strand where it exits the tetramer. Each RuvB hexamer is contacted by two RuvA subunits (via domain III) on 2 adjacent RuvB subunits; this complex drives branch migration. In the full resolvosome a probable DNA-RuvA(4)-RuvB(12)-RuvC(2) complex forms which resolves the HJ.

The protein resides in the cytoplasm. It catalyses the reaction ATP + H2O = ADP + phosphate + H(+). Functionally, the RuvA-RuvB-RuvC complex processes Holliday junction (HJ) DNA during genetic recombination and DNA repair, while the RuvA-RuvB complex plays an important role in the rescue of blocked DNA replication forks via replication fork reversal (RFR). RuvA specifically binds to HJ cruciform DNA, conferring on it an open structure. The RuvB hexamer acts as an ATP-dependent pump, pulling dsDNA into and through the RuvAB complex. RuvB forms 2 homohexamers on either side of HJ DNA bound by 1 or 2 RuvA tetramers; 4 subunits per hexamer contact DNA at a time. Coordinated motions by a converter formed by DNA-disengaged RuvB subunits stimulates ATP hydrolysis and nucleotide exchange. Immobilization of the converter enables RuvB to convert the ATP-contained energy into a lever motion, pulling 2 nucleotides of DNA out of the RuvA tetramer per ATP hydrolyzed, thus driving DNA branch migration. The RuvB motors rotate together with the DNA substrate, which together with the progressing nucleotide cycle form the mechanistic basis for DNA recombination by continuous HJ branch migration. Branch migration allows RuvC to scan DNA until it finds its consensus sequence, where it cleaves and resolves cruciform DNA. This is Holliday junction branch migration complex subunit RuvB from Coxiella burnetii (strain RSA 331 / Henzerling II).